A 137-amino-acid chain; its full sequence is Transcription antitermination protein NusB (137 aa).

Belongs to the NusB family.

Functionally, involved in transcription antitermination. Required for transcription of ribosomal RNA (rRNA) genes. Binds specifically to the boxA antiterminator sequence of the ribosomal RNA (rrn) operons. The polypeptide is Transcription antitermination protein NusB (Actinobacillus pleuropneumoniae serotype 5b (strain L20)).